The primary structure comprises 413 residues: Serine hydroxymethyltransferase (413 aa).

Residues Leu-117 and 121–123 (GHL) each bind (6S)-5,6,7,8-tetrahydrofolate. At Lys-226 the chain carries N6-(pyridoxal phosphate)lysine. 349–351 (SPF) lines the (6S)-5,6,7,8-tetrahydrofolate pocket.

Belongs to the SHMT family. As to quaternary structure, homodimer. It depends on pyridoxal 5'-phosphate as a cofactor.

The protein localises to the cytoplasm. It catalyses the reaction (6R)-5,10-methylene-5,6,7,8-tetrahydrofolate + glycine + H2O = (6S)-5,6,7,8-tetrahydrofolate + L-serine. It functions in the pathway one-carbon metabolism; tetrahydrofolate interconversion. The protein operates within amino-acid biosynthesis; glycine biosynthesis; glycine from L-serine: step 1/1. Its function is as follows. Catalyzes the reversible interconversion of serine and glycine with tetrahydrofolate (THF) serving as the one-carbon carrier. This reaction serves as the major source of one-carbon groups required for the biosynthesis of purines, thymidylate, methionine, and other important biomolecules. Also exhibits THF-independent aldolase activity toward beta-hydroxyamino acids, producing glycine and aldehydes, via a retro-aldol mechanism. This is Serine hydroxymethyltransferase from Listeria monocytogenes serotype 4b (strain F2365).